A 647-amino-acid polypeptide reads, in one-letter code: UvrABC system protein C (647 aa).

The GIY-YIG domain maps to 16–95 (VEPGVYRFRD…IKEFDPRFNV (80 aa)). The region spanning 208-243 (DRFARELEQQMNAAAAELDFERAARLRDDLGALKRA) is the UVR domain.

This sequence belongs to the UvrC family. Interacts with UvrB in an incision complex.

Its subcellular location is the cytoplasm. Functionally, the UvrABC repair system catalyzes the recognition and processing of DNA lesions. UvrC both incises the 5' and 3' sides of the lesion. The N-terminal half is responsible for the 3' incision and the C-terminal half is responsible for the 5' incision. The chain is UvrABC system protein C from Mycolicibacterium paratuberculosis (strain ATCC BAA-968 / K-10) (Mycobacterium paratuberculosis).